The primary structure comprises 181 residues: Probable calcium-binding protein CML43 (181 aa).

3 EF-hand domains span residues 24 to 59, 107 to 142, and 145 to 180; these read LNAL…LGLD, SPES…LGLP, and GEIE…VVVP. Residues aspartate 37, asparagine 39, aspartate 41, glutamate 48, aspartate 120, aspartate 122, aspartate 124, glutamate 131, aspartate 158, asparagine 160, aspartate 162, arginine 164, and glutamate 169 each coordinate Ca(2+).

As to expression, expressed specifically in roots.

Its function is as follows. Calcium-binding protein that may mediate calcium-dependent signal during plant defense response. This is Probable calcium-binding protein CML43 (CML43) from Arabidopsis thaliana (Mouse-ear cress).